The chain runs to 324 residues: Melanoma-associated antigen B16 (324 aa).

Over residues 1–15 the composition is skewed to basic and acidic residues; it reads MSQDQESPRCTHDQH. Disordered regions lie at residues 1–22 and 39–108; these read MSQD…FSET and LSSS…PRNV. Low complexity predominate over residues 70–81; that stretch reads SSSIAVTTTSSS. Positions 82 to 95 are enriched in acidic residues; it reads ESDEASSNQEEEDS. The MAGE domain occupies 113-312; that stretch reads LDQKVAFLVN…HSFPSQYAEA (200 aa).

This is Melanoma-associated antigen B16 (MAGEB16) from Homo sapiens (Human).